Reading from the N-terminus, the 484-residue chain is Sperm motility kinase Tcr mutant form (484 aa).

Positions 8 to 256 (YEMLETIGQG…VAEVMVHPWV (249 aa)) constitute a Protein kinase domain. ATP-binding positions include 14-22 (IGQGGCAQV) and Lys37. The Proton acceptor role is filled by Asp127. Disordered stretches follow at residues 355 to 400 (EPTG…TMDQ) and 426 to 446 (STEG…RGWP). The segment covering 391–400 (PINTTPTMDQ) has biased composition (polar residues).

The protein belongs to the protein kinase superfamily. Tyr protein kinase family. Smok subfamily. As to expression, testis-specific. Expressed in the testis from 22 days postpartum (22 dpp). Expressed late in spermiogenesis, only in Tcr-containing t-haplotypes.

It carries out the reaction L-seryl-[protein] + ATP = O-phospho-L-seryl-[protein] + ADP + H(+). The enzyme catalyses L-threonyl-[protein] + ATP = O-phospho-L-threonyl-[protein] + ADP + H(+). In terms of biological role, while the main function of Smoks is to control sperm motility, the role of Smok-Tcr, with reduced kinase activity, is to counterbalance a signaling impairment caused by the distorter/sterility loci, giving t-sperm an advantage in reaching the oocytes. Transmission ratio distortion also called segregation distortion is the name given to the phenomenon above-mentioned. Being associated with the T-complex, it allows males heterozygous for a complete t-haplotype to preferentially transmit the t-haplotype chromosome. This is Sperm motility kinase Tcr mutant form (Smoktcr) from Mus musculus (Mouse).